The following is a 140-amino-acid chain: Large ribosomal subunit protein uL16 (140 aa).

It belongs to the universal ribosomal protein uL16 family. In terms of assembly, part of the 50S ribosomal subunit.

In terms of biological role, binds 23S rRNA and is also seen to make contacts with the A and possibly P site tRNAs. This is Large ribosomal subunit protein uL16 from Trichlorobacter lovleyi (strain ATCC BAA-1151 / DSM 17278 / SZ) (Geobacter lovleyi).